We begin with the raw amino-acid sequence, 461 residues long: Ribonuclease inhibitor (461 aa).

S2 carries the N-acetylserine modification. A 2 X 5 AA tandem repeats of S-L-D-I-Q region spans residues 2-11 (SLDIQSLDIQ). 15 LRR repeats span residues 20-48 (WAEL…CKDI), 49-76 (SSAL…VHCV), 77-105 (LQGL…CGVL), 106-133 (SSTL…LQLL), 134-162 (CEGL…CKPL), 163-190 (ASVL…VRVL), 191-219 (CQGL…CRDL), 220-247 (CGIV…MAEL), 248-276 (CPGL…CGDL), 277-304 (CRVL…ARLL), 305-333 (CETL…CSHF), 334-361 (SSVL…VQEL), 362-390 (CQGL…CSSL), 391-418 (AATL…ILQL), and 419-447 (VESV…EDRL). S91 is modified (phosphoserine).

As to quaternary structure, forms high-affinity heterodimers with RNASE1, ANG and RNASE2.

It is found in the cytoplasm. The protein resides in the nucleus. Its function is as follows. Ribonuclease inhibitor which inhibits RNASE1, RNASE2 and angiogenin (ANG). May play a role in redox homeostasis. Required to inhibit the cytotoxic tRNA ribonuclease activity of ANG in the cytoplasm in absence of stress. Relocates to the nucleus in response to stress, relieving inhibition of ANG in the cytoplasm, and inhibiting the angiogenic activity of ANG in the nucleus. In Pan troglodytes (Chimpanzee), this protein is Ribonuclease inhibitor (RNH1).